The following is a 48-amino-acid chain: Large ribosomal subunit protein bL33A (48 aa).

The protein belongs to the bacterial ribosomal protein bL33 family.

The chain is Large ribosomal subunit protein bL33A from Bacillus mycoides (strain KBAB4) (Bacillus weihenstephanensis).